Reading from the N-terminus, the 552-residue chain is 2-methyl-1,2-propanediol dehydrogenase (552 aa).

It belongs to the GMC oxidoreductase family. The cofactor is FAD.

The protein resides in the cytoplasm. The catalysed reaction is 2-methylpropane-1,2-diol + NAD(+) = 2-hydroxy-2-methylpropanal + NADH + H(+). Involved in the degradation of methyl tert-butyl ether (MTBE). Catalyzes the conversion of 2-methyl 1,2-propanediol (2-M1,2-PD) to hydroxyisobutyraldehyde. This chain is 2-methyl-1,2-propanediol dehydrogenase, found in Mycolicibacterium austroafricanum (Mycobacterium austroafricanum).